The following is a 369-amino-acid chain: Putative agmatine deiminase 2 (369 aa).

The Amidino-cysteine intermediate role is filled by C356.

This sequence belongs to the agmatine deiminase family.

It catalyses the reaction agmatine + H2O = N-carbamoylputrescine + NH4(+). This chain is Putative agmatine deiminase 2, found in Listeria monocytogenes serovar 1/2a (strain ATCC BAA-679 / EGD-e).